The chain runs to 417 residues: Serine--tRNA ligase (417 aa).

226–228 (TSE) lines the L-serine pocket. Residues 257 to 259 (RRE) and Val273 each bind ATP. L-serine is bound at residue Glu280. ATP is bound at residue 344-347 (ELTS). Position 379 (Thr379) interacts with L-serine.

The protein belongs to the class-II aminoacyl-tRNA synthetase family. Type-1 seryl-tRNA synthetase subfamily. As to quaternary structure, homodimer. The tRNA molecule binds across the dimer.

It is found in the cytoplasm. The catalysed reaction is tRNA(Ser) + L-serine + ATP = L-seryl-tRNA(Ser) + AMP + diphosphate + H(+). It carries out the reaction tRNA(Sec) + L-serine + ATP = L-seryl-tRNA(Sec) + AMP + diphosphate + H(+). Its pathway is aminoacyl-tRNA biosynthesis; selenocysteinyl-tRNA(Sec) biosynthesis; L-seryl-tRNA(Sec) from L-serine and tRNA(Sec): step 1/1. In terms of biological role, catalyzes the attachment of serine to tRNA(Ser). Is also able to aminoacylate tRNA(Sec) with serine, to form the misacylated tRNA L-seryl-tRNA(Sec), which will be further converted into selenocysteinyl-tRNA(Sec). This chain is Serine--tRNA ligase, found in Mycolicibacterium smegmatis (strain ATCC 700084 / mc(2)155) (Mycobacterium smegmatis).